The chain runs to 95 residues: Mitochondrial import inner membrane translocase subunit Tim13 (95 aa).

A Twin CX3C motif motif is present at residues 46–69; the sequence is CFKKCIGKPGSTLDNSEQKCIAMC. Cystine bridges form between cysteine 46/cysteine 69 and cysteine 50/cysteine 65.

The protein belongs to the small Tim family. Heterohexamer; composed of 3 copies of TIMM8 (TIMM8A or TIMM8B) and 3 copies of TIMM13, named soluble 70 kDa complex. Associates with the TIM22 complex, whose core is composed of TIMM22.

The protein resides in the mitochondrion inner membrane. Mitochondrial intermembrane chaperone that participates in the import and insertion of some multi-pass transmembrane proteins into the mitochondrial inner membrane. Also required for the transfer of beta-barrel precursors from the TOM complex to the sorting and assembly machinery (SAM complex) of the outer membrane. Acts as a chaperone-like protein that protects the hydrophobic precursors from aggregation and guide them through the mitochondrial intermembrane space. The TIMM8-TIMM13 complex mediates the import of some proteins while the predominant TIMM9-TIMM10 70 kDa complex mediates the import of much more proteins. This Danio rerio (Zebrafish) protein is Mitochondrial import inner membrane translocase subunit Tim13 (timm13).